Reading from the N-terminus, the 363-residue chain is DNA replication and repair protein RecF (363 aa).

Gly30–Thr37 is an ATP binding site.

This sequence belongs to the RecF family.

The protein localises to the cytoplasm. In terms of biological role, the RecF protein is involved in DNA metabolism; it is required for DNA replication and normal SOS inducibility. RecF binds preferentially to single-stranded, linear DNA. It also seems to bind ATP. This is DNA replication and repair protein RecF from Syntrophotalea carbinolica (strain DSM 2380 / NBRC 103641 / GraBd1) (Pelobacter carbinolicus).